The sequence spans 102 residues: Small ribosomal subunit protein uS14 (102 aa).

Belongs to the universal ribosomal protein uS14 family. In terms of assembly, part of the 30S ribosomal subunit. Contacts proteins S3 and S10.

In terms of biological role, binds 16S rRNA, required for the assembly of 30S particles and may also be responsible for determining the conformation of the 16S rRNA at the A site. This is Small ribosomal subunit protein uS14 from Dichelobacter nodosus (strain VCS1703A).